The primary structure comprises 121 residues: ATP synthase epsilon chain (121 aa).

It belongs to the ATPase epsilon chain family. F-type ATPases have 2 components, CF(1) - the catalytic core - and CF(0) - the membrane proton channel. CF(1) has five subunits: alpha(3), beta(3), gamma(1), delta(1), epsilon(1). CF(0) has three main subunits: a, b and c.

The protein resides in the cell membrane. Its function is as follows. Produces ATP from ADP in the presence of a proton gradient across the membrane. This is ATP synthase epsilon chain from Mycolicibacterium vanbaalenii (strain DSM 7251 / JCM 13017 / BCRC 16820 / KCTC 9966 / NRRL B-24157 / PYR-1) (Mycobacterium vanbaalenii).